The chain runs to 293 residues: Energy-coupling factor transporter ATP-binding protein EcfA2 (293 aa).

In terms of domain architecture, ABC transporter spans 3–246; the sequence is ITFQKVEHRY…ADELEKIGVD (244 aa). 40–47 lines the ATP pocket; sequence GHTGSGKS.

The protein belongs to the ABC transporter superfamily. Energy-coupling factor EcfA family. As to quaternary structure, forms a stable energy-coupling factor (ECF) transporter complex composed of 2 membrane-embedded substrate-binding proteins (S component), 2 ATP-binding proteins (A component) and 2 transmembrane proteins (T component).

It is found in the cell membrane. ATP-binding (A) component of a common energy-coupling factor (ECF) ABC-transporter complex. Unlike classic ABC transporters this ECF transporter provides the energy necessary to transport a number of different substrates. This is Energy-coupling factor transporter ATP-binding protein EcfA2 from Bacillus thuringiensis (strain Al Hakam).